Consider the following 297-residue polypeptide: N-acetylneuraminate lyase (297 aa).

2 residues coordinate aceneuramate: S47 and T48. Residue Y137 is the Proton donor of the active site. K165 functions as the Schiff-base intermediate with substrate in the catalytic mechanism. 5 residues coordinate aceneuramate: T167, G189, D191, E192, and S208.

It belongs to the DapA family. NanA subfamily. As to quaternary structure, homotetramer.

It is found in the cytoplasm. The catalysed reaction is aceneuramate = aldehydo-N-acetyl-D-mannosamine + pyruvate. The protein operates within amino-sugar metabolism; N-acetylneuraminate degradation; D-fructose 6-phosphate from N-acetylneuraminate: step 1/5. Catalyzes the reversible aldol cleavage of N-acetylneuraminic acid (sialic acid; Neu5Ac) to form pyruvate and N-acetylmannosamine (ManNAc) via a Schiff base intermediate. This is N-acetylneuraminate lyase from Salmonella typhimurium (strain LT2 / SGSC1412 / ATCC 700720).